The chain runs to 330 residues: DNA-directed RNA polymerase subunit alpha (330 aa).

The alpha N-terminal domain (alpha-NTD) stretch occupies residues 1–232; the sequence is MAILAFQKPD…YHFMLFSDEK (232 aa). Positions 248 to 330 are alpha C-terminal domain (alpha-CTD); sequence EEVLHMRQLL…DISKYKLDKE (83 aa).

Belongs to the RNA polymerase alpha chain family. Homodimer. The RNAP catalytic core consists of 2 alpha, 1 beta, 1 beta' and 1 omega subunit. When a sigma factor is associated with the core the holoenzyme is formed, which can initiate transcription.

The catalysed reaction is RNA(n) + a ribonucleoside 5'-triphosphate = RNA(n+1) + diphosphate. In terms of biological role, DNA-dependent RNA polymerase catalyzes the transcription of DNA into RNA using the four ribonucleoside triphosphates as substrates. The sequence is that of DNA-directed RNA polymerase subunit alpha from Bacteroides fragilis (strain ATCC 25285 / DSM 2151 / CCUG 4856 / JCM 11019 / LMG 10263 / NCTC 9343 / Onslow / VPI 2553 / EN-2).